The following is a 66-amino-acid chain: Cold shock-like protein CspLA (66 aa).

A CSD domain is found at 4–63 (GTVKWFNAEKGFGFIERENGDDVFVHFSAIQGDGFKSLDEGQAVTFDVEEGQRGPQAANV).

In terms of assembly, homodimer.

The protein resides in the cytoplasm. In Listeria innocua serovar 6a (strain ATCC BAA-680 / CLIP 11262), this protein is Cold shock-like protein CspLA (cspLA).